A 249-amino-acid chain; its full sequence is 5'-nucleotidase SurE (249 aa).

A divalent metal cation is bound by residues Asp9, Asp10, Ser40, and Asn92.

It belongs to the SurE nucleotidase family. The cofactor is a divalent metal cation.

It localises to the cytoplasm. It catalyses the reaction a ribonucleoside 5'-phosphate + H2O = a ribonucleoside + phosphate. Nucleotidase that shows phosphatase activity on nucleoside 5'-monophosphates. The polypeptide is 5'-nucleotidase SurE (Shewanella sp. (strain MR-4)).